An 86-amino-acid chain; its full sequence is Large ribosomal subunit protein bL31m (86 aa).

A mitochondrion-targeting transit peptide spans 1 to 18 (MKCSLRLFEKAGRLSVRS).

This sequence belongs to the bacterial ribosomal protein bL31 family. Highly divergent. As to quaternary structure, component of the mitochondrial large ribosomal subunit (mt-LSU). Mature yeast 74S mitochondrial ribosomes consist of a small (37S) and a large (54S) subunit. The 37S small subunit contains a 15S ribosomal RNA (15S mt-rRNA) and at least 32 different proteins. The 54S large subunit contains a 21S rRNA (21S mt-rRNA) and at least 45 different proteins.

It is found in the mitochondrion. Functionally, component of the mitochondrial ribosome (mitoribosome), a dedicated translation machinery responsible for the synthesis of mitochondrial genome-encoded proteins, including at least some of the essential transmembrane subunits of the mitochondrial respiratory chain. The mitoribosomes are attached to the mitochondrial inner membrane and translation products are cotranslationally integrated into the membrane. This chain is Large ribosomal subunit protein bL31m (tam9), found in Schizosaccharomyces pombe (strain 972 / ATCC 24843) (Fission yeast).